The following is a 55-amino-acid chain: Large ribosomal subunit protein bL33B (55 aa).

It belongs to the bacterial ribosomal protein bL33 family.

The polypeptide is Large ribosomal subunit protein bL33B (Salinispora tropica (strain ATCC BAA-916 / DSM 44818 / JCM 13857 / NBRC 105044 / CNB-440)).